A 674-amino-acid polypeptide reads, in one-letter code: Phosphopantothenoylcysteine decarboxylase subunit VHS3 (674 aa).

Disordered regions lie at residues 1-164 (MTNK…SILS), 190-230 (LNSD…RPSV), 348-368 (QHNS…NITG), 384-426 (TSSN…SNVV), and 575-674 (VSAG…LQRS). Positions 15–81 (ASNTLSGAEQ…TSGAVVSNTP (67 aa)) are enriched in polar residues. At Thr-90 the chain carries Phosphothreonine. The segment covering 106–116 (EQTPPNQVARQ) has biased composition (polar residues). Over residues 137-150 (NLKDINTKVPKDGE) the composition is skewed to basic and acidic residues. A compositionally biased stretch (polar residues) spans 152 to 164 (SASSFSTPTSILS). Residues 198–212 (SPRKEHPHFYVEDPL) are compositionally biased toward basic and acidic residues. Residues 214–230 (TPSVRSRSNSTSPRPSV) show a composition bias toward low complexity. A compositionally biased stretch (polar residues) spans 351-368 (SIDTSFNSTNSNAGNITG). Residues 384 to 395 (TSSNSAASQTNN) show a composition bias toward low complexity. The segment covering 403–426 (MASTTGFPSTLGGSRTYSNSSNVV) has biased composition (polar residues). The span at 580–591 (EEEEDEDNDEED) shows a compositional bias: acidic residues. Residues 592-602 (DNKKNDTGGKD) show a composition bias toward basic and acidic residues. Residues 603–660 (EDNDDDDDDDDDDDDDDDDDDDDDDDDDDDDDDDDDDDDDDDDDDDDDEDDEDEDEDD) are compositionally biased toward acidic residues. The span at 661-674 (EGKKKEDKGGLQRS) shows a compositional bias: basic and acidic residues.

The protein belongs to the HFCD (homooligomeric flavin containing Cys decarboxylase) superfamily. Interacts with the C-terminal domain of PPZ1. Component of the phosphopantothenoylcysteine decarboxylase (PPCDC) complex, a heterotrimer composed of CAB3, SIS2 and VHS3.

Functionally, component of the phosphopantothenoylcysteine decarboxylase (PPCDC) involved in the coenzyme A synthesis. Acts as an inhibitory subunit of protein phosphatase PPZ1, which is involved in many cellular processes such as G1-S transition or salt tolerance. This is Phosphopantothenoylcysteine decarboxylase subunit VHS3 (VHS3) from Saccharomyces cerevisiae (strain ATCC 204508 / S288c) (Baker's yeast).